The sequence spans 386 residues: Zinc finger protein 385A (386 aa).

The segment at 74–98 adopts a Matrin-type 1 zinc-finger fold; sequence ISCNICQIRFNSQSQAEAHYKGNRH. The segment at 90 to 193 is disordered; that stretch reads EAHYKGNRHA…ASLPGGSKEE (104 aa). Over residues 103–121 the composition is skewed to basic and acidic residues; the sequence is KGIEAAKTRGREPGVREPG. The interval 145–351 is necessary for binding to ITPR1, CEBPA and p53/TP53 mRNAs; it reads NGLGPAPGSP…AGSPLSLRPA (207 aa). Residue serine 185 is modified to Phosphoserine. A Matrin-type 2 zinc finger spans residues 201–225; that stretch reads LYCALCKVAVNSLSQLEAHNKGTKH. Threonine 248 carries the phosphothreonine modification. The segment at 261–285 adopts a Matrin-type 3 zinc-finger fold; sequence FHCEICNVKVNSEVQLKQHISSRRH. The tract at residues 279 to 309 is disordered; the sequence is HISSRRHRDGVAGKPNPLLSRHKKSRGAGEL.

As to quaternary structure, interacts with ELAVL1; the interaction is indirect, mRNA-dependent and may regulate p53/TP53 expression. Interacts with p53/TP53; the interaction is direct and enhances p53/TP53 transactivation functions on cell-cycle arrest target genes, resulting in growth arrest. In terms of processing, ubiquitinated upon prolonged exposure to genotoxic stress, which leads to proteasomal degradation of ZNF385A and releases p53/TP53 from cell-cycle arrest target gene promoters. Expressed predominantly in the retina.

It is found in the cytoplasm. The protein resides in the nucleus. Its subcellular location is the nucleolus. It localises to the cell projection. The protein localises to the dendrite. In terms of biological role, RNA-binding protein that affects the localization and the translation of a subset of mRNA. May play a role in adipogenesis through binding to the 3'-UTR of CEBPA mRNA and regulation of its translation. Targets ITPR1 mRNA to dendrites in Purkinje cells, and may regulate its activity-dependent translation. With ELAVL1, binds the 3'-UTR of p53/TP53 mRNAs to control their nuclear export induced by CDKN2A. Hence, may regulate p53/TP53 expression and mediate in part the CDKN2A anti-proliferative activity. May also bind CCNB1 mRNA. Alternatively, may also regulate p53/TP53 activity through direct protein-protein interaction. Interacts with p53/TP53 and promotes cell-cycle arrest over apoptosis enhancing preferentially the DNA binding and transactivation of p53/TP53 on cell-cycle arrest target genes over proapoptotic target genes. May also regulate the ubiquitination and stability of CDKN1A promoting DNA damage-induced cell cycle arrest. Also plays a role in megakaryocytes differentiation. In Homo sapiens (Human), this protein is Zinc finger protein 385A (ZNF385A).